The sequence spans 298 residues: Short-chain dehydrogenase/reductase prx6 (298 aa).

Isoleucine 27, aspartate 70, asparagine 97, tyrosine 174, lysine 178, valine 208, and threonine 210 together coordinate NADP(+). Residue tyrosine 174 is the Proton acceptor of the active site. Catalysis depends on lysine 178, which acts as the Lowers pKa of active site Tyr.

The protein belongs to the short-chain dehydrogenases/reductases (SDR) family.

The protein operates within sesquiterpene biosynthesis. In terms of biological role, short-chain dehydrogenase/reductase; part of the gene cluster that mediates the biosynthesis of PR-toxin, a bicyclic sesquiterpene belonging to the eremophilane class and acting as a mycotoxin. The first step of the pathway is catalyzed by the aristolochene synthase which performs the cyclization of trans,trans-farnesyl diphosphate (FPP) to the bicyclic sesquiterpene aristolochene. Following the formation of aristolochene, the non-oxygenated aristolochene is converted to the trioxygenated intermediate eremofortin B, via 7-epi-neopetasone. This conversion appears to involve three enzymes, a hydroxysterol oxidase-like enzyme, the quinone-oxidase prx3 that forms the quinone-type-structure in the bicyclic nucleus of aristolochene with the C8-oxo group and the C-3 hydroxyl group, and the P450 monooxygenase prx9 that introduces the epoxide at the double bond between carbons 1 and 2. No monoxy or dioxy-intermediates have been reported to be released to the broth, so these three early oxidative reactions may be coupled together. Eremofortin B is further oxidized by another P450 monooxygenase, that introduces a second epoxide between carbons 7 and 11 prior to acetylation to eremofortin A by the acetyltransferase prx11. The second epoxidation may be performed by a second P450 monooxygenase. After the acetylation step, eremofortin A is converted to eremofortin C and then to PR-toxin. First the conversion of eremofortin A to eremofortin C proceeds by oxidation of the side chain of the molecule at C-12 and is catalyzed by the short-chain oxidoreductase prx1. The cytochrome P450 monooxygenase prx8 also plays a role in this step. The primary alcohol formed at C-12 is finally oxidized by the short-chain alcohol dehydrogenase prx4 that forms PR-toxin. This is Short-chain dehydrogenase/reductase prx6 from Penicillium rubens (strain ATCC 28089 / DSM 1075 / NRRL 1951 / Wisconsin 54-1255) (Penicillium chrysogenum).